A 520-amino-acid polypeptide reads, in one-letter code: uncharacterized protein (520 aa).

A run of 9 helical transmembrane segments spans residues 38–58 (VVLI…IPGG), 84–104 (IAIY…GIFN), 105–125 (IGIS…ILKV), 138–158 (IITV…VATL), 167–187 (VVSA…LVET), 220–240 (FGWL…AVVL), 271–291 (FLSF…VYTA), 318–338 (IAIG…SVLI), and 355–375 (ASLV…MVYF).

It localises to the cell membrane. This is an uncharacterized protein from Mycoplasma genitalium (strain ATCC 33530 / DSM 19775 / NCTC 10195 / G37) (Mycoplasmoides genitalium).